The following is a 333-amino-acid chain: MNFQVTGLGLDKIKLDSPQSFLDQEEVEEAEDGQLLEPEAWRTYVERRNALQEFLTSDLSPHLLKRHHARMELLKKCSYYIEILPKHLALGDQNPLVLPTTMFQLIDPWKFQRMKKVGAAQTKIQLLLLGDLLEQLDHGRSELDALLESPDPRPFLAGWGLVEQRLADLSAVMDSFLAMMVPGRLHIKHRLVSDIGATKIPHIRLMLSTKMPVMFDRKESVAHQDWVSLRWFVTIQQAVPEQFELRYKLLDPRTQQECMQCGIIPVAACAFDIRNLLPNRAYKFTVKRAESYTLVYEPWRDSLTLHTRPGPPEGLAPSRLGKLGLSLTTPSER.

A Fibronectin type-III domain is found at 212–310; sequence PVMFDRKESV…DSLTLHTRPG (99 aa). The tract at residues 307–333 is disordered; that stretch reads TRPGPPEGLAPSRLGKLGLSLTTPSER.

In Bos taurus (Bovine), this protein is Fibronectin type III domain-containing protein 11.